Here is a 551-residue protein sequence, read N- to C-terminus: Protein MTL1 (551 aa).

The N-terminal stretch at 1–35 is a signal peptide; the sequence is MASCNPTRKKSSASSLSMWRTILMALTTLPLSVLS. Residues 36 to 361 lie on the Extracellular side of the membrane; the sequence is QELVPANSTT…HSGLSKKNRN (326 aa). 3 disordered regions span residues 108–143, 206–227, and 243–263; these read MQVSSSSTSSSSSEVTSSSSSSSISPSSSSSTIISS, PSSSTSSPPSSSSELTSSSYSS, and SSSSSSSSSSSSSSSSSSSSS. Residues 362–382 form a helical membrane-spanning segment; that stretch reads IIIGCVVGIGAPLILILLILI. The Cytoplasmic segment spans residues 383–551; that stretch reads YMFCVQPKKT…PNNGLNITNY (169 aa). The tract at residues 429 to 513 is disordered; that stretch reads SSDSPIGSNN…SNSNSQDYND (85 aa). The span at 430–441 shows a compositional bias: polar residues; the sequence is SDSPIGSNNIQN. The span at 466 to 477 shows a compositional bias: acidic residues; sequence GYDDDDDDDAND. A phosphoserine mark is found at serine 481 and serine 482. Low complexity predominate over residues 498-508; sequence SASYSMSNSNS.

The protein belongs to the MID2 like cell wall stress sensor family.

The protein localises to the membrane. Its function is as follows. Involved in cell integrity signaling during vegetative growth at elevated temperature. Acts positively on the PKC1-MAPK pathway. Cell membrane sensor of oxidative stress in the cell integrity pathway upstream of PKC1. Required to transmit the oxidative signal to SLT2 and to restore the correct actin organization following oxidative stress. Multicopy suppressor of 1,3-beta-glucan synthase (GS) mutation. Also suppresses RGD1 null mutations. The chain is Protein MTL1 (MTL1) from Saccharomyces cerevisiae (strain ATCC 204508 / S288c) (Baker's yeast).